A 502-amino-acid chain; its full sequence is Mannitol 2-dehydrogenase (502 aa).

Position 35–46 (35–46 (IVHVGVGGFHRA)) interacts with NAD(+).

Belongs to the mannitol dehydrogenase family. Monomer.

It catalyses the reaction D-mannitol + NAD(+) = D-fructose + NADH + H(+). In terms of biological role, catalyzes the NAD(H)-dependent interconversion of D-fructose and D-mannitol in the mannitol metabolic pathway. This Pyricularia oryzae (strain 70-15 / ATCC MYA-4617 / FGSC 8958) (Rice blast fungus) protein is Mannitol 2-dehydrogenase.